Here is a 381-residue protein sequence, read N- to C-terminus: Chymosin (381 aa).

The N-terminal stretch at 1 to 16 (MRCLVVLLAVFALSQG) is a signal peptide. A propeptide spans 17 to 58 (AEITRIPLYKGKPLRKALKERGLLEDFLQKQQYGVSSEYSGF) (activation peptide). In terms of domain architecture, Peptidase A1 spans 74 to 378 (YFGKIYLGTP…DRANNLVGLA (305 aa)). Residue Asp-92 is part of the active site. 2 disulfides stabilise this stretch: Cys-105/Cys-110 and Cys-265/Cys-269. Asp-274 is an active-site residue. A disulfide bridge connects residues Cys-308 and Cys-341.

It belongs to the peptidase A1 family. As to quaternary structure, monomer.

The enzyme catalyses Broad specificity similar to that of pepsin A. Clots milk by cleavage of a single 104-Ser-Phe-|-Met-Ala-107 bond in kappa-chain of casein.. Its function is as follows. Chymosin is synthesized in the mucosa of the stomach. The enzyme hydrolyzes casein to paracasein. In Ovis aries (Sheep), this protein is Chymosin (CYM).